The following is a 177-amino-acid chain: Large ribosomal subunit protein uL6 (177 aa).

Belongs to the universal ribosomal protein uL6 family. Part of the 50S ribosomal subunit.

In terms of biological role, this protein binds to the 23S rRNA, and is important in its secondary structure. It is located near the subunit interface in the base of the L7/L12 stalk, and near the tRNA binding site of the peptidyltransferase center. The chain is Large ribosomal subunit protein uL6 from Polynucleobacter necessarius subsp. necessarius (strain STIR1).